The chain runs to 592 residues: Putative D-/L-hydantoinase subunit B (592 aa).

Belongs to the HyuB family. May form a complex with HyuA.

Its function is as follows. Involved in the asymmetric conversion of racemic 5-substituted hydantoins to the corresponding L-amino acids. HyuA and HyuB are both required for the conversion of D- and L-5-substituted hydantoins to corresponding N-carbamoyl-D- and N-carbamoyl-L-amino acids, respectively. This is Putative D-/L-hydantoinase subunit B from Pseudomonas sp. (strain NS671).